A 366-amino-acid chain; its full sequence is Putative integrase/recombinase HI_1572 (366 aa).

A Core-binding (CB) domain is found at 54–133 (ITLDELIDKY…SLSALMAKTI (80 aa)). Positions 168-331 (IFVSGYDVEH…DMAEGYKTKA (164 aa)) constitute a Tyr recombinase domain. Catalysis depends on residues R201, K226, and H308. Catalysis depends on Y318, which acts as the O-(3'-phospho-DNA)-tyrosine intermediate.

It belongs to the 'phage' integrase family.

The chain is Putative integrase/recombinase HI_1572 from Haemophilus influenzae (strain ATCC 51907 / DSM 11121 / KW20 / Rd).